The sequence spans 418 residues: Tryptophan synthase beta chain (418 aa).

The span at 1–12 (MTSTLPTANTPD) shows a compositional bias: polar residues. A disordered region spans residues 1–21 (MTSTLPTANTPDPASLMPSVR). N6-(pyridoxal phosphate)lysine is present on Lys111.

This sequence belongs to the TrpB family. As to quaternary structure, tetramer of two alpha and two beta chains. Pyridoxal 5'-phosphate is required as a cofactor.

The enzyme catalyses (1S,2R)-1-C-(indol-3-yl)glycerol 3-phosphate + L-serine = D-glyceraldehyde 3-phosphate + L-tryptophan + H2O. Its pathway is amino-acid biosynthesis; L-tryptophan biosynthesis; L-tryptophan from chorismate: step 5/5. The beta subunit is responsible for the synthesis of L-tryptophan from indole and L-serine. The polypeptide is Tryptophan synthase beta chain (Synechococcus sp. (strain CC9311)).